We begin with the raw amino-acid sequence, 161 residues long: Peroxynitrite isomerase (161 aa).

Residues 17–23 (GSWVGRG) carry the GXWXGXG motif. Heme b is bound at residue His-152.

Belongs to the nitrobindin family. In terms of assembly, homodimer. Heme b serves as cofactor.

It carries out the reaction peroxynitrite = nitrate. The protein operates within nitrogen metabolism. Its function is as follows. Heme-binding protein able to scavenge peroxynitrite and to protect free L-tyrosine against peroxynitrite-mediated nitration, by acting as a peroxynitrite isomerase that converts peroxynitrite to nitrate. Therefore, this protein likely plays a role in peroxynitrite sensing and in the detoxification of reactive nitrogen and oxygen species (RNS and ROS, respectively). Is able to bind nitric oxide (NO) in vitro, but may act as a sensor of peroxynitrite levels in vivo. This is Peroxynitrite isomerase from Mycobacterium leprae (strain TN).